The primary structure comprises 316 residues: Transaldolase (316 aa).

Catalysis depends on Lys132, which acts as the Schiff-base intermediate with substrate.

This sequence belongs to the transaldolase family. Type 1 subfamily. In terms of assembly, homodimer.

It localises to the cytoplasm. It catalyses the reaction D-sedoheptulose 7-phosphate + D-glyceraldehyde 3-phosphate = D-erythrose 4-phosphate + beta-D-fructose 6-phosphate. The protein operates within carbohydrate degradation; pentose phosphate pathway; D-glyceraldehyde 3-phosphate and beta-D-fructose 6-phosphate from D-ribose 5-phosphate and D-xylulose 5-phosphate (non-oxidative stage): step 2/3. Functionally, transaldolase is important for the balance of metabolites in the pentose-phosphate pathway. This is Transaldolase from Vibrio campbellii (strain ATCC BAA-1116).